Consider the following 481-residue polypeptide: Threonine synthase (481 aa).

N6-(pyridoxal phosphate)lysine is present on lysine 118.

This sequence belongs to the threonine synthase family. In terms of assembly, monomer. Requires pyridoxal 5'-phosphate as cofactor.

It catalyses the reaction O-phospho-L-homoserine + H2O = L-threonine + phosphate. The protein operates within amino-acid biosynthesis; L-threonine biosynthesis; L-threonine from L-aspartate: step 5/5. Functionally, catalyzes the gamma-elimination of phosphate from L-phosphohomoserine and the beta-addition of water to produce L-threonine. This chain is Threonine synthase (thrC), found in Corynebacterium glutamicum (strain ATCC 13032 / DSM 20300 / JCM 1318 / BCRC 11384 / CCUG 27702 / LMG 3730 / NBRC 12168 / NCIMB 10025 / NRRL B-2784 / 534).